We begin with the raw amino-acid sequence, 99 residues long: MEVKTFAFLQIAVCIAIGIELICAGTNALNDEELFTVDYCGTNCTQQPNGSWTTCPGNCSCYHEDGKTDGFCLSTEYTDFTQFPNLTSEEMDAATPRPE.

Residues 1-28 (MEVKTFAFLQIAVCIAIGIELICAGTNA) form the signal peptide. Disulfide bonds link Cys40–Cys59, Cys44–Cys61, and Cys55–Cys72. N-linked (GlcNAc...) asparagine glycosylation is found at Asn43, Asn49, Asn58, and Asn85.

The protein localises to the secreted. Its function is as follows. Salivary chemokine-binding protein which binds to host chemokines CXCL1, CXCL2, CXCL3, CXCL5 and CXCL8. In Ixodes ricinus (Common tick), this protein is Evasin P1162.